The chain runs to 1114 residues: MTDVNPVRSDNCRQYNNVPPQIDLPAMDHEIIDLWARQHTFDKSLEATKDGQPWTFFEGPPTANGQPGTHHVEARVFKDIFPRFKTMQGFRVDRKAGWDCHGLPVELAVEKELGFSGKPDIEKYGVEPFNAKCRESVTRHVDAFSELTERMGYWVNMDEAYWTMSPSYVESVWWGLKRIWDKGLLGEDHRVAPYCPRCGTTLSDHELAQGYQDDRDPSIYVRFPVTSGPLAGRAKLLVWTTTPWTLVSNTAVAVHPEVRYVVAHRDPVPEGSDAVATASAEDPASQDLIIAEPLFEKVLGEGWSLTGESFLGSQMELWTYERPYNFLEWPKTERVTVDGRPTPADANFVVLADYVTVEDGTGLVHQAPAFGADDLQTCRRYGLPLVNPIRPDGTFEESVPLVGGQFFKTADKPLCEDLDRRGVLFRLEMHWHSYPHCWRCDTHLIYYAQPSWYIRTTKVKEQLLAQNEVTTWYPETIKHGRFGDWLENNIDWAVSRSRYWGTPLPLWRNDDDRSDVICVESLAELSQYVGRDLTGMDPHRPFIDEVTFTRDGHTYHRVPEVADAWLDSGSMPFAQWGYPHVPGSKEKFESHYPGDFICEAIDQTRGWFYTMMAVGTLVFDESSYRNVLCLGHILAEDGRKMSKHLGNILLPIPLMDSHGADALRWFMAADGSPWSARRVGDETIQETVRKVLLTYWNTVSFQVLYARANGWSPAQGTQHDADPARGFGGVVPPAVGSRGFGGVVPPAVTERHVLDRWLVSATNVLVRDVTEALNNFDTQRVGNLIAQFVDELSNWYVRRSRRRFWDGDEGALWTLHETLETLTKLMAPMVPFITERVWQDLFVTTNPHGPESVHLASWPVADDSLIDESLSESMDLARRIVELGRGARAEAKAKIRQPLSRALISGAALAKLDEDLQAEIRSELNVMALDSFTAAGDLVDHCAKGNFRALGKKYAKATPKVAAAIAAADPEWLASELAIKGSVEMDVPEVEGGKAVVTADDVIVSERPREGWSVVNEQGETVALDLEITPELARAGQAREVIRFVQDSRKKAGLDVSDRITLAWSASADLATAIEEHAEQISQEVLAVQMSREPRADDWAVEPDLGLAVKVVKV.

A 'HIGH' region motif is present at residues 61-71 (PTANGQPGTHH). Positions 640–644 (KMSKH) match the 'KMSKS' region motif. Residue lysine 643 coordinates ATP.

The protein belongs to the class-I aminoacyl-tRNA synthetase family. IleS type 2 subfamily. Monomer. Requires Zn(2+) as cofactor.

Its subcellular location is the cytoplasm. The enzyme catalyses tRNA(Ile) + L-isoleucine + ATP = L-isoleucyl-tRNA(Ile) + AMP + diphosphate. Its function is as follows. Catalyzes the attachment of isoleucine to tRNA(Ile). As IleRS can inadvertently accommodate and process structurally similar amino acids such as valine, to avoid such errors it has two additional distinct tRNA(Ile)-dependent editing activities. One activity is designated as 'pretransfer' editing and involves the hydrolysis of activated Val-AMP. The other activity is designated 'posttransfer' editing and involves deacylation of mischarged Val-tRNA(Ile). This Cutibacterium acnes (strain DSM 16379 / KPA171202) (Propionibacterium acnes) protein is Isoleucine--tRNA ligase.